The following is a 601-amino-acid chain: Kelch-like ECH-associated protein 1A (601 aa).

The 74-residue stretch at 44–117 folds into the BTB domain; it reads MDELRHHEML…VISRLIDFAY (74 aa). The 101-residue stretch at 153–253 folds into the BACK domain; that stretch reads KNLEPSNVIG…LNAVHIYALP (101 aa). 6 Kelch repeats span residues 292–337, 338–388, 389–435, 436–482, 484–529, and 530–576; these read PTPH…PCSG, LGAC…PRNR, VGVG…ARLG, AGVA…VRSG, GVVC…CRSA, and HGVS…GRSG.

The protein belongs to the KEAP1 family. Homodimer and heterodimer; heterodimerizes with keap1b. Component of the BCR(KEAP1) E3 ubiquitin ligase complex, at least composed of 2 molecules of cul3, 2 molecules of keap1 (keap1a and/or keap1b), and rbx1. Interacts with nfe2l2/nrf2; the interaction is direct. Non-enzymatic covalent modifications of reactive cysteines by electrophile metabolites inactivate the BCR(KEAP1) complex. Widely expressed.

It is found in the cytoplasm. It localises to the nucleus. Its pathway is protein modification; protein ubiquitination. With respect to regulation, ubiquitin ligase activity of the BCR(KEAP1) complex is inhibited by oxidative stress and electrophile metabolites such as sulforaphane. Electrophile metabolites react with reactive cysteine residues in keap1 and trigger non-enzymatic covalent modifications of these cysteine residues, leading to inactivate the ubiquitin ligase activity of the BCR(KEAP1) complex. Its function is as follows. Substrate-specific adapter of a BCR (BTB-CUL3-RBX1) E3 ubiquitin ligase complex that regulates the response to oxidative stress by targeting nfe2l2/nrf2 for ubiquitination. Keap1 acts as a key sensor of oxidative and electrophilic stress: in normal conditions, the BCR(KEAP1) complex mediates ubiquitination and degradation of nfe2l2/nrf2, a transcription factor regulating expression of many cytoprotective genes. In response to oxidative stress, different electrophile metabolites trigger non-enzymatic covalent modifications of highly reactive cysteine residues in KEAP1, leading to inactivate the ubiquitin ligase activity of the BCR(KEAP1) complex, promoting nfe2l2/nrf2 nuclear accumulation and expression of phase II detoxifying enzymes. In Danio rerio (Zebrafish), this protein is Kelch-like ECH-associated protein 1A.